We begin with the raw amino-acid sequence, 596 residues long: Aspartate--tRNA(Asp/Asn) ligase (596 aa).

Position 172 (E172) interacts with L-aspartate. The segment at 196–199 (QLFK) is aspartate. R218 lines the L-aspartate pocket. Residues 218–220 (RDE) and Q227 contribute to the ATP site. H455 contacts L-aspartate. E489 provides a ligand contact to ATP. R496 provides a ligand contact to L-aspartate. ATP is bound at residue 541–544 (GLDR).

Belongs to the class-II aminoacyl-tRNA synthetase family. Type 1 subfamily. In terms of assembly, homodimer.

The protein localises to the cytoplasm. The catalysed reaction is tRNA(Asx) + L-aspartate + ATP = L-aspartyl-tRNA(Asx) + AMP + diphosphate. Functionally, aspartyl-tRNA synthetase with relaxed tRNA specificity since it is able to aspartylate not only its cognate tRNA(Asp) but also tRNA(Asn). Reaction proceeds in two steps: L-aspartate is first activated by ATP to form Asp-AMP and then transferred to the acceptor end of tRNA(Asp/Asn). This chain is Aspartate--tRNA(Asp/Asn) ligase, found in Bordetella bronchiseptica (strain ATCC BAA-588 / NCTC 13252 / RB50) (Alcaligenes bronchisepticus).